Consider the following 828-residue polypeptide: Potassium channel SKOR (828 aa).

Over 1 to 86 the chain is Cytoplasmic; the sequence is MGGSSGGGVS…PDNRWYKAWT (86 aa). Residues 87–107 traverse the membrane as a helical segment; sequence MFILIWALYSSFFTPLEFGFF. Topologically, residues 108–114 are extracellular; the sequence is RGLPENL. Residues 115–135 form a helical membrane-spanning segment; sequence FILDIAGQIAFLVDIVLTFFV. At 136–158 the chain is on the cytoplasmic side; sequence AYRDSRTYRMIYKRSSIALRYLK. Residues 159–179 form a helical membrane-spanning segment; the sequence is STFIIDLLACMPWDIIYKAAG. Topologically, residues 180–185 are extracellular; that stretch reads EKEEVR. The chain crosses the membrane as a helical; Voltage-sensor span at residues 186-206; it reads YLLLIRLYRVHRVILFFHKME. At 207–220 the chain is on the cytoplasmic side; the sequence is KDIRINYLFTRIVK. A helical membrane pass occupies residues 221–241; sequence LIFVELYCTHTAACIFYYLAT. Topologically, residues 242–276 are extracellular; the sequence is TLPASQEGYTWIGSLKLGDYSYSKFREIDLWTRYT. Positions 277 to 296 form an intramembrane region, pore-forming; the sequence is TSMYFAVVTMATVGYGDIHA. At 297 to 300 the chain is on the extracellular side; that stretch reads VNMR. A helical transmembrane segment spans residues 301-321; it reads EMIFAMVYISFDMILGAYLIG. At 322–828 the chain is on the cytoplasmic side; it reads NMTALIVKGS…GQKLYLAVET (507 aa). 403–523 is a binding site for a nucleoside 3',5'-cyclic phosphate; that stretch reads LFRGCSSEFI…RRILNNLLEG (121 aa). 6 ANK repeats span residues 545–576, 580–609, 613–642, 644–673, 677–706, and 710–740; these read EAELALKLNSAAFYGDLYQLKSLIRAGGDPNK, DGRSPLHLAASRGYEDITLYLIQESVDVNI, LGSTPLLEAIKNGNDRVAALLVKEGATLNI, NAGTFLCTVVAKGDSDFLKRLLSNGIDPNS, DHRTPLHVAASEGFYVLAIQLVEASANVLA, and WGNTPLDEALGCGNKMLIKLLEDAKNSQISS. One can recognise a KHA domain in the interval 756–828; it reads KCTVYFSHPG…GQKLYLAVET (73 aa).

Belongs to the potassium channel family. Plant (TC 1.A.1.4) subfamily. As to quaternary structure, the potassium channel is probably composed of a homo- or heterotetrameric complex of pore-forming subunits. In terms of tissue distribution, expressed in root pericycle and xylem parenchyma, and in flower at a lower level.

It is found in the membrane. Functionally, highly selective outward-rectifying potassium channel. Involved in potassium release into the xylem sap toward the shoots. Assuming opened or closed conformations in response to the voltage difference across the membrane, the channel is activated by depolarization. The voltage-dependence of the channel is abolished by internal or external acidification. May interact with the cytoskeleton or with regulatory proteins. This chain is Potassium channel SKOR (SKOR), found in Arabidopsis thaliana (Mouse-ear cress).